The sequence spans 810 residues: MAKSQRDLKGWQYFLDDAELNNTDSVNGEPTTPSRRSRRGKSTSSQKISLKREEDELEIKEGDFLLVQQDNNSPEVAIVKEIKFGNDNFLDIIVSWFIRMRDIEEADLPKVEEYKERSQLNENELFITSYLDEVKLGEIIDKVNILSEEEFNNDIVIDDSNKASTFICRRGCDSAGELFTDVFDFRDLCVLFEKNHHEFIEFIRRKTVPVAYNANKTHDKSKSIKDKLDEVETKKPKQKTVSKQILDEEEENNDSSDEFESAIDLQDEPSSDELESDEDASESKNKSPRKRKASSKPKAVKEKQKRVKIPNNHSKFDDESRQFITSVVSPLNKRMKIKDSSKPSILALSPRKPKKGVSKGENGKNGSLGVDASSEAFKELKEKLHTSTRLSSLPCREDEFTSIYLNLETAIQEQTGCCLYVSGTPGVGKTATVREVIAQLRELTEMGELNDFDYLEINGLKLLSPNVAYEKLWEKISGLKVTASNAALLLESYFSQDTPRKPLIVLMDELDQIVTKKQNVMYNFFNWPTYSNSKLIVIAVANTMDLPERVLSNKISSRLGLRRIQFIGYTFEQLGSIIKHRLDMLTKQNKRKVIINSDAIGFASRKVASVSGDARRALTICRRAVEIAEKDFLSSKEDPGNEQEIENESYHVQISHISKAINETVNSPISQFLMSLPFASKLVLAGVLLRMKRSGLAENSLGDIIDEMKNSLTMLTSRDGDKVLEAIDSKMTLIDLLYGNGLLQNLDSTFNSKDTNIRILRFKYIVNELVENGILQQNVRGERHSLINLNISEEEIVSVLKRDKEISSIL.

Over residues 21 to 30 (NNTDSVNGEP) the composition is skewed to polar residues. Positions 21-52 (NNTDSVNGEPTTPSRRSRRGKSTSSQKISLKR) are disordered. The 127-residue stretch at 57 to 183 (LEIKEGDFLL…SAGELFTDVF (127 aa)) folds into the BAH domain. A compositionally biased stretch (basic and acidic residues) spans 219–235 (DKSKSIKDKLDEVETKK). Disordered stretches follow at residues 219 to 317 (DKSK…SKFD) and 334 to 370 (RMKIKDSSKPSILALSPRKPKKGVSKGENGKNGSLGV). The span at 247–280 (DEEEENNDSSDEFESAIDLQDEPSSDELESDEDA) shows a compositional bias: acidic residues. Positions 286-295 (KSPRKRKASS) are enriched in basic residues. 423 to 431 (GTPGVGKTA) is an ATP binding site. Mg(2+) contacts are provided by D508 and E509. The ATP site is built by E509, N542, and R615.

It belongs to the ORC1 family. ORC is composed of six subunits.

It is found in the nucleus. Component of the origin recognition complex (ORC) that binds origins of replication. It has a role in both chromosomal replication and mating type transcriptional silencing. Binds to the ARS consensus sequence (ACS) of origins of replication in an ATP-dependent manner. This is Origin recognition complex subunit 1 (ORC1) from Debaryomyces hansenii (strain ATCC 36239 / CBS 767 / BCRC 21394 / JCM 1990 / NBRC 0083 / IGC 2968) (Yeast).